The following is a 185-amino-acid chain: Ribosome-recycling factor (185 aa).

The protein belongs to the RRF family.

It is found in the cytoplasm. Responsible for the release of ribosomes from messenger RNA at the termination of protein biosynthesis. May increase the efficiency of translation by recycling ribosomes from one round of translation to another. The polypeptide is Ribosome-recycling factor (Buchnera aphidicola subsp. Acyrthosiphon pisum (strain 5A)).